The chain runs to 435 residues: Galactose/lactose metabolism regulatory protein GAL80 (435 aa).

Residue Met1 is modified to N-acetylmethionine.

It to K.lactis GAL80. Monomer.

In terms of biological role, this protein is a negative regulator for the gene expression of the lactose/galactose metabolic genes. It binds to GAL4 and so blocks transcriptional activation by it, in the absence of an inducing sugar. The chain is Galactose/lactose metabolism regulatory protein GAL80 (GAL80) from Saccharomyces cerevisiae (strain ATCC 204508 / S288c) (Baker's yeast).